The sequence spans 437 residues: GTPase Der (437 aa).

EngA-type G domains lie at 3-167 and 176-352; these read NIVA…TKKV and PAIA…DIRQ. GTP-binding positions include 9–16, 56–60, 119–122, 182–189, 229–233, and 294–297; these read GRPNVGKS, DTGGW, NKAD, GKPNVGKS, DTAGI, and NKWD. A KH-like domain is found at 353 to 437; sequence IKIPTSQLNR…TPINIFMREK (85 aa).

Belongs to the TRAFAC class TrmE-Era-EngA-EngB-Septin-like GTPase superfamily. EngA (Der) GTPase family. As to quaternary structure, associates with the 50S ribosomal subunit.

Functionally, GTPase that plays an essential role in the late steps of ribosome biogenesis. The sequence is that of GTPase Der from Azobacteroides pseudotrichonymphae genomovar. CFP2.